The primary structure comprises 248 residues: Caffeoyl-CoA O-methyltransferase 3 (248 aa).

Lysine 22 is a binding site for substrate. S-adenosyl-L-methionine is bound by residues threonine 64, glutamate 86, 88–89 (GV), serine 94, aspartate 112, and alanine 141. Aspartate 164 contacts substrate. Aspartate 164 is an a divalent metal cation binding site. Aspartate 166 contributes to the S-adenosyl-L-methionine binding site. Positions 190 and 191 each coordinate a divalent metal cation. Asparagine 195 is a binding site for substrate.

It belongs to the class I-like SAM-binding methyltransferase superfamily. Cation-dependent O-methyltransferase family. CCoAMT subfamily. It depends on a divalent metal cation as a cofactor. As to expression, mostly expressed in petal limbs and tubes, and, at low levels, in stems, roots and leaves.

It localises to the cytoplasm. It is found in the cytosol. It carries out the reaction (E)-caffeoyl-CoA + S-adenosyl-L-methionine = (E)-feruloyl-CoA + S-adenosyl-L-homocysteine + H(+). It catalyses the reaction (E)-5-hydroxyferuloyl-CoA + S-adenosyl-L-methionine = (E)-sinapoyl-CoA + S-adenosyl-L-homocysteine + H(+). It participates in aromatic compound metabolism; phenylpropanoid biosynthesis. Functionally, involved in the production of floral volatile phenylpropanoids in flowers of fragrant cultivars (e.g. cv. Mitchell and cv. V26) from cinnamic acid, a common precursor with the anthocyanin biosynthesis pathway involved in flower pigmentation. Methylates caffeoyl-CoA to feruloyl-CoA, also able to methylate 5-hydroxyferuloyl-CoA. The protein is Caffeoyl-CoA O-methyltransferase 3 of Petunia hybrida (Petunia).